A 302-amino-acid polypeptide reads, in one-letter code: Glycine--tRNA ligase alpha subunit (302 aa).

The protein belongs to the class-II aminoacyl-tRNA synthetase family. In terms of assembly, tetramer of two alpha and two beta subunits.

It is found in the cytoplasm. The catalysed reaction is tRNA(Gly) + glycine + ATP = glycyl-tRNA(Gly) + AMP + diphosphate. The sequence is that of Glycine--tRNA ligase alpha subunit from Xanthomonas euvesicatoria pv. vesicatoria (strain 85-10) (Xanthomonas campestris pv. vesicatoria).